Reading from the N-terminus, the 350-residue chain is Transmembrane protein 185B (350 aa).

7 helical membrane passes run 16–36 (LIYACLLLFSVLLPLRLDGVI), 41–61 (WAVFAPIWLWKLLVLAGASVG), 81–101 (FKAMLIAVGIHLLLLMFEVLV), 111–131 (FWLLVFMPLFFVSPVSVAACV), 168–188 (WLVVFVPLWILMSFLCLVVLY), 211–231 (VTMAICWITIVVPLLIFEVLL), and 240–260 (MFSYISIFVPLWLSLITLMAT).

This sequence belongs to the TMEM185 family.

The protein localises to the membrane. The polypeptide is Transmembrane protein 185B (TMEM185B) (Bos taurus (Bovine)).